The primary structure comprises 929 residues: Urea transporter 2 (929 aa).

The span at 1–11 (MSDHPLKEMSD) shows a compositional bias: basic and acidic residues. The tract at residues 1-89 (MSDHPLKEMS…KRRESELPRR (89 aa)) is disordered. Residues 31–42 (SELSSPTWPSSS) are compositionally biased toward low complexity. Positions 55-88 (PEEKDLRSSDEDSHIVKIEKPNERSKRRESELPR) are enriched in basic and acidic residues. 9 helical membrane-spanning segments follow: residues 133-155 (GAAQVMFVNNPLSGLIIFIGLLI), 162-179 (IAGALGTVVSTLAALALS), 184-204 (AIASGLHGYNGMLVGLLVAVF), 212-232 (WWLLFPVTFASMACPVISSAL), 241-261 (LPVFTLPFNIALTLYLAATGH), 310-330 (GGVILVALFISSPLICLHAAI), 349-371 (IYTGLWSYNCVLSCVAIGGMFYV), 378-399 (LLALVCALFCAYTGAALSNMMA), and 400-420 (VVGVPPGTWAFCLSTLTFLLL). The disordered stretch occupies residues 451–480 (SDEQKPPNGGGGEQSHGGGQRKAEEGSETV). The span at 458 to 470 (NGGGGEQSHGGGQ) shows a compositional bias: gly residues. The residue at position 486 (Ser486) is a Phosphoserine. 4 helical membrane passes run 609-629 (GILIVLGLFVQNPWWAISGCL), 647-667 (AIAAGLHGYNGVLVGLLMAVF), 675-695 (WWLLLPVIVMSMTCPILSSAL), and 704-724 (LPVFTLPFNIAVTLYLAATGH). Residue Asn742 is glycosylated (N-linked (GlcNAc...) asparagine). The next 4 helical transmembrane spans lie at 773–793 (GGIFLVALFVSSPLICLHAAI), 812–832 (IYFGLCGFNSTLACIAIGGMF), 841–861 (LLAIACALFAAYLGAALANML), and 863–883 (VFGLPPCTWPFCLSALTFLLL).

The protein belongs to the urea transporter family. Interacts with SNAPIN which enhances its urea transport activity. Expressed in the inner medulla of the kidney. As to expression, expressed in both the inner and outer renal medulla of the kidney.

The protein resides in the apical cell membrane. It localises to the cell membrane. The enzyme catalyses urea(in) = urea(out). Inhibited by phloretin. Activated by vasopressin, forskolin, 3-isobutyl-1-methylxanthine (IBMX) and cAMP. With respect to regulation, inhibited by phloretin. Its activity is regulated as follows. Inhibited by urea analogs and phloretin and activated by forskolin. Inhibited by phloretin and activated by forskolin. In terms of biological role, mediates the transport of urea driven by a concentration gradient across the cell membrane of the kidney inner medullary collecting duct which is critical to the urinary concentrating mechanism. In Rattus norvegicus (Rat), this protein is Urea transporter 2 (Slc14a2).